Here is a 98-residue protein sequence, read N- to C-terminus: Serine protease inhibitor Kazal-type 14 (98 aa).

Residues 1-23 (MVKYFQVLWSLLFSIMLHSMLLA) form the signal peptide. Positions 35–98 (GLIKIKCPYK…QIRYYHTGRC (64 aa)) constitute a Kazal-like domain. 3 cysteine pairs are disulfide-bonded: Cys-41–Cys-80, Cys-58–Cys-77, and Cys-66–Cys-98. Asn-52 carries N-linked (GlcNAc...) asparagine glycosylation.

It is found in the secreted. Functionally, may be a serine protease inhibitor. In Rattus norvegicus (Rat), this protein is Serine protease inhibitor Kazal-type 14 (Spink14).